The primary structure comprises 485 residues: Membrane-bound lytic murein transglycosylase F (485 aa).

An N-terminal signal peptide occupies residues 1–29; that stretch reads MFAHTALRQRCAKWLLATGLFLLLGACVE. The interval 30 to 267 is non-LT domain; it reads KPSTLERVKE…RLKDRYYGHV (238 aa). The interval 268–485 is LT domain; the sequence is DVLGYVGAYT…DKPADKSSPM (218 aa). Glu314 is an active-site residue. Residues 465 to 485 form a disordered region; that stretch reads EGNLHVPGVNKDKPADKSSPM. Basic and acidic residues predominate over residues 474-485; that stretch reads NKDKPADKSSPM.

It in the N-terminal section; belongs to the bacterial solute-binding protein 3 family. The protein in the C-terminal section; belongs to the transglycosylase Slt family.

It is found in the cell outer membrane. The catalysed reaction is Exolytic cleavage of the (1-&gt;4)-beta-glycosidic linkage between N-acetylmuramic acid (MurNAc) and N-acetylglucosamine (GlcNAc) residues in peptidoglycan, from either the reducing or the non-reducing ends of the peptidoglycan chains, with concomitant formation of a 1,6-anhydrobond in the MurNAc residue.. Functionally, murein-degrading enzyme that degrades murein glycan strands and insoluble, high-molecular weight murein sacculi, with the concomitant formation of a 1,6-anhydromuramoyl product. Lytic transglycosylases (LTs) play an integral role in the metabolism of the peptidoglycan (PG) sacculus. Their lytic action creates space within the PG sacculus to allow for its expansion as well as for the insertion of various structures such as secretion systems and flagella. The sequence is that of Membrane-bound lytic murein transglycosylase F from Pseudomonas putida (strain ATCC 47054 / DSM 6125 / CFBP 8728 / NCIMB 11950 / KT2440).